Reading from the N-terminus, the 113-residue chain is Nucleoid-associated protein Csac_1593 (113 aa).

The protein belongs to the YbaB/EbfC family. As to quaternary structure, homodimer.

It localises to the cytoplasm. The protein localises to the nucleoid. Its function is as follows. Binds to DNA and alters its conformation. May be involved in regulation of gene expression, nucleoid organization and DNA protection. The sequence is that of Nucleoid-associated protein Csac_1593 from Caldicellulosiruptor saccharolyticus (strain ATCC 43494 / DSM 8903 / Tp8T 6331).